The following is an 849-amino-acid chain: Membrane protein-large ribosomal subunit bL9 fusion protein (849 aa).

The interval 1-680 (MFSKNKHNTK…TQLEGTNIKT (680 aa)) is unknown. A run of 2 helical transmembrane segments spans residues 11-31 (FIVIACVIVVLILILFCFDFQ) and 64-84 (IIFFIFNFFGKIILASFIISF). In terms of domain architecture, GGDEF spans 214-342 (KTLAIAMIAF…GGDQVVVNIE (129 aa)). The interval 681–849 (VTDTLKHFLK…FLNVTERKSK (169 aa)) is large ribosomal subunit protein bL9.

The protein belongs to the bacterial ribosomal protein bL9 family.

Its subcellular location is the cell membrane. Functionally, binds to the 23S rRNA. The protein is Membrane protein-large ribosomal subunit bL9 fusion protein of Aster yellows witches'-broom phytoplasma (strain AYWB).